Here is a 456-residue protein sequence, read N- to C-terminus: Probable glycine dehydrogenase (decarboxylating) subunit 1 (456 aa).

It belongs to the GcvP family. N-terminal subunit subfamily. As to quaternary structure, the glycine cleavage system is composed of four proteins: P, T, L and H. In this organism, the P 'protein' is a heterodimer of two subunits.

It catalyses the reaction N(6)-[(R)-lipoyl]-L-lysyl-[glycine-cleavage complex H protein] + glycine + H(+) = N(6)-[(R)-S(8)-aminomethyldihydrolipoyl]-L-lysyl-[glycine-cleavage complex H protein] + CO2. Functionally, the glycine cleavage system catalyzes the degradation of glycine. The P protein binds the alpha-amino group of glycine through its pyridoxal phosphate cofactor; CO(2) is released and the remaining methylamine moiety is then transferred to the lipoamide cofactor of the H protein. The protein is Probable glycine dehydrogenase (decarboxylating) subunit 1 of Rhizorhabdus wittichii (strain DSM 6014 / CCUG 31198 / JCM 15750 / NBRC 105917 / EY 4224 / RW1) (Sphingomonas wittichii).